The primary structure comprises 2340 residues: MKNICWLTLKLVKFVVLGCIIWISVAQSTVLSSCLTSCVTNLGRQLDSGTRYNLSEACIHGCQFWNSVDQETCALKCNDTYATICERESCEVGCSNAEGSYEEEVLESTELPTAPFASSIGSHGVTLRWNPANISGVKYIIQWKYAQLPGSWTFTETVSKLSYTVEPLHPFTEYIFRVVWIFTAQLHLYSPPSPSYRTHPYGVPETAPLILNMESWSPDTVEVSWAPPHFPGGPILGYNLRLISKNQKLDSGTQRTSFQFYSTLPNTTYRFSIAAVNEVGEGPEAESTVTTPSPSVQEEEQWLFLSRKTSLRKRSLKYLVDEAHCLWSDAIHHNITGISVYAQQQVVYFSEGTVIWMKGAANMSDVSDLRIFYQGSGLVSSISIDWLYQRMYFIMDKLVYVCELKNCSNLEEITPFSLIAPQKVVVDSYNGYLFYLLRDGIYRVNLPLPSGRDTKAVRIVESGTLKDFAVKPQSKRIIYFNDTMQLFMSTFLDGSAFHRVLPWVPLVTVKSFACENNDFLITDGKAIFQQDSLSFNEFIVGCDLSHIEEFGFGNLVIFGSSVQSYPLPGHPQEVSVLFGSREALIQWTPPALAIGASPSAWQNWTYEVKVYSQDILEITQVFSNISGTMLNVPELQSSTKYTVSVRASSPKGPGPWSAPSVGTTLVPATEPPFIMAVKEDGLWSKPLCSFGPGEFLSSDVGNVSDMDWYNNSLYYSDTKGNVYVRPLNGMDISENYHIPSIVGAGALAFEWLGHFLYWAGKTYVIQRQSVLTGHTDIVTHVKLLVNDMAVDSVGGYLYWTTLYSVESTRLNGESSLVLQAQPWLSGKKVIALTLDLSDGLLYWLVQDNQCIHLYTAVLRGWSGGDATITEFAAWSTSEISQNALMYYSGRLFWINGFRIITAQEIGQRTSVSVSEPAKFNQFTIIQTSLKPLPGNFSSTPKVIPDPVQESSFRIEGHTSSFQILWNEPPAVDWGIVFYSVEFSTHSKFLIIEQQSLPIFTVEGLEPYTLFNLSVTPYTYWGKGQKTSLSFRAPESVPSAPENPRIFILSSGRYTKKNEVVVEFRWNKPKHENGVLTKFEIFYHISKQSGTNRSTEDWMSASVIPPVMSFQLEAVSPEYTVAFQVRVFTSKGPGPFSDIVMSKTSEIKPCPYLISLLGNKIVFLDMDQNQVLWTFSLEGDVSTVGYTTDDEMGYFAQGDTLFLLNLRNHSSSKLFQDALVSDIRVIAVDWIARHLYFALKASQNGTQIFNVDLEHKVKSPREVKTCKAHTTIISFSIYPLLSRLYWTEVSDLGHQMFYCNISNHTSQHVLQPKASNQHGRSQCSCNVTESELSGAMTVDTSDPDRPWIYFTKRQEIWAMDLEGCQCWKVIMVPTIPGKRIISLTVDGEFIYWIMKTKDDAQIYQAKKGSGAILSQVKASRSKHILAYSSALQPFPDKAYLSLASDMVEATILYATNTSLTLKLPPVKTNLTWHGITHPTSTYLIYYMEANRANSSDRRHKMLESQENVARIEGLQPFSMYMIQIAVKNYYSEPLEHLPLGKEIQGQTKSGVPGAVCHINATVLSDTSLHVFWTESHKPNGPKESVRYQLVMSYLAPIPETPLRQGEFPSAKLSLLITKLSGGQLYVMKVLACHPEEMWCTESHPVSVNMFDTPEKPSALVPENTSLQLDWKARSNVNLTGFWFELQKWKYNEFYHVKASCSQGPVYVCNITDLQPYTSYNIRVVVVYTTGENSSSIPESFKTKAGVPSKPGIPKLLEGSKNSIQWEKAEDNGSRLMYYTLEVRKGISNDSQNQSSRWKVVFNGSCSSICTWRSKNLKGTFQFRAVAANEIGLGEYSEISEDITLVEDGVWITETSFILTIIVGIFLVATVPLTFVWHRSLKSHKASKEGLSVLNDNDKELAELRGLAAGVGLANACYAVHTVPTQEEIENLPAFPREKLSLRLLLGSGAFGEVYEGTAIDILGVGSGEIKVAVKTLKKGSTDQEKIEFLKEAHLMSKFNHPNILKQLGVCLLGEPQYIILELMEGGDLLSYLRKARGTTFHGPSLTLLDLVELCVDISKGCVYLEQMHFIHRDLAARNCLVSVKDYTSPRVVKIGDFGLAREIYKNDYYRKRGEGLLPVRWMAPENLMDGIFTSQSDVWSFGILVWEILTLGHQPYPAHSNLDVLNYVQAGGRLEPPRNCPDDLWNLMSQCWAQEPDQRPTFHNIQNQLQLFRNVFLNNVSHCGEAAPTGGVINKGFEGEDDEMVTLNSDDTMPVALMETKNQEGLNYMVLATKCSQGEGSYEGPLGPKELGSCDLKKDKKQPQADKDFCQEPQVAYGSPGLSEGLNYACLAHSEHGDVSE.

The first 28 residues, 1 to 28 (MKNICWLTLKLVKFVVLGCIIWISVAQS), serve as a signal peptide directing secretion. At 29–1854 (TVLSSCLTSC…EDGVWITETS (1826 aa)) the chain is on the extracellular side. Asn53 carries N-linked (GlcNAc...) asparagine glycosylation. 2 consecutive Fibronectin type-III domains span residues 111–206 (LPTA…VPET) and 207–295 (APLI…PSPS). 2 N-linked (GlcNAc...) asparagine glycosylation sites follow: Asn334 and Asn362. The Fibronectin type-III 3 domain occupies 567–667 (LPGHPQEVSV…APSVGTTLVP (101 aa)). Residues Asn935 and Asn1011 are each glycosylated (N-linked (GlcNAc...) asparagine). 2 Fibronectin type-III domains span residues 943–1038 (IPDP…SVPS) and 1039–1146 (APEN…TSEI). Asn1243 is a glycosylation site (N-linked (GlcNAc...) asparagine). Fibronectin type-III domains lie at 1442 to 1549 (ASDM…TKSG), 1550 to 1649 (VPGA…VNMF), 1651 to 1744 (TPEK…TKAG), and 1745 to 1846 (VPSK…LVED). The N-linked (GlcNAc...) asparagine glycan is linked to Asn1676. A helical transmembrane segment spans residues 1855 to 1875 (FILTIIVGIFLVATVPLTFVW). The Cytoplasmic portion of the chain corresponds to 1876-2340 (HRSLKSHKAS…AHSEHGDVSE (465 aa)). Positions 1938–2216 (LSLRLLLGSG…QLQLFRNVFL (279 aa)) constitute a Protein kinase domain. ATP is bound by residues 1944–1952 (LGSGAFGEV) and Lys1973. Residue Asp2072 is the Proton acceptor of the active site. A phosphotyrosine; by autocatalysis mark is found at Tyr2267 and Tyr2327.

This sequence belongs to the protein kinase superfamily. Tyr protein kinase family. Insulin receptor subfamily. In terms of assembly, interacts with PTPN11; may activate the PI3 kinase-mTOR signaling pathway. Interacts with VAV3; constitutive interaction mediating VAV3 phosphorylation. Interacts with PTPN6 (via SH2 1 domain); the interaction is direct and promotes ROS1 dephosphorylation. In terms of processing, phosphorylated. Probably autophosphorylates. Phosphorylation at Tyr-2267 and/or Tyr-2327 recruits PTPN11. Phosphorylation at Tyr-2267 is required for the interaction with PTPN6 that mediates ROS1 dephosphorylation. Phosphorylation at Tyr-2267 stimulates the kinase activity and the activation of the ERK1 signaling cascade. In terms of tissue distribution, expressed by epithelial cells of the caput epididymis (at protein level).

It is found in the cell membrane. The catalysed reaction is L-tyrosyl-[protein] + ATP = O-phospho-L-tyrosyl-[protein] + ADP + H(+). Inhibited by dephosphorylation by PTPN6. Its function is as follows. Receptor tyrosine kinase (RTK) that plays a role in epithelial cell differentiation and regionalization of the proximal epididymal epithelium. NELL2 is an endogenous ligand for ROS1. Upon endogenous stimulation by NELL2, ROS1 activates the intracellular signaling pathway and triggers epididymal epithelial differentiation and subsequent sperm maturation. May activate several downstream signaling pathways related to cell differentiation, proliferation, growth and survival including the PI3 kinase-mTOR signaling pathway. Mediates the phosphorylation of PTPN11, an activator of this pathway. May also phosphorylate and activate the transcription factor STAT3 to control anchorage-independent cell growth. Mediates the phosphorylation and the activation of VAV3, a guanine nucleotide exchange factor regulating cell morphology. May activate other downstream signaling proteins including AKT1, MAPK1, MAPK3, IRS1, and PLCG2. The polypeptide is Proto-oncogene tyrosine-protein kinase ROS (Ros1) (Mus musculus (Mouse)).